A 292-amino-acid chain; its full sequence is MFHGSMVALVTPMHPDGALDWEGLRRLVDFHIENGTDAIVTVGTTGESPTLEVKEHIRVIREVVDQAQGRLPVIAGTGANSTREAEELTRAALEAGADACLLVVPYYNRPTQEGLYLHFKAIAEAVPIPQILYNVPTRTACDLLPETVARLADISNIVGIKEATEDIARGRQILELCGDKLDLYSGEDSAAMEYMLIGGRGTISVTANVAPKAVHEMCTVALQGNRKAAEAINTRLCPLYAALFSEVNPIPVKWALYEMGLIAQGIRLPLTVLSERYHELLRQALRQEQILQ.

Thr45 provides a ligand contact to pyruvate. Tyr133 functions as the Proton donor/acceptor in the catalytic mechanism. Lys161 serves as the catalytic Schiff-base intermediate with substrate. Ile203 is a binding site for pyruvate.

The protein belongs to the DapA family. Homotetramer; dimer of dimers.

The protein resides in the cytoplasm. The enzyme catalyses L-aspartate 4-semialdehyde + pyruvate = (2S,4S)-4-hydroxy-2,3,4,5-tetrahydrodipicolinate + H2O + H(+). It participates in amino-acid biosynthesis; L-lysine biosynthesis via DAP pathway; (S)-tetrahydrodipicolinate from L-aspartate: step 3/4. Catalyzes the condensation of (S)-aspartate-beta-semialdehyde [(S)-ASA] and pyruvate to 4-hydroxy-tetrahydrodipicolinate (HTPA). This is 4-hydroxy-tetrahydrodipicolinate synthase from Nitrosococcus oceani (strain ATCC 19707 / BCRC 17464 / JCM 30415 / NCIMB 11848 / C-107).